We begin with the raw amino-acid sequence, 293 residues long: Probable tRNA-splicing endonuclease subunit Sen2 (293 aa).

Catalysis depends on residues Tyr157, His165, and Lys204. A helical transmembrane segment spans residues 267–287; that stretch reads VVFNHWGVILGFTVLSGLLVY.

Belongs to the tRNA-intron endonuclease family. TRNA splicing endonuclease is a heterotetramer composed of SEN2, SEN15, SEN34/LENG5 and SEN54.

It localises to the nucleus. Its subcellular location is the membrane. It carries out the reaction pretRNA = a 3'-half-tRNA molecule with a 5'-OH end + a 5'-half-tRNA molecule with a 2',3'-cyclic phosphate end + an intron with a 2',3'-cyclic phosphate and a 5'-hydroxyl terminus.. In terms of biological role, constitutes one of the two catalytic subunit of the tRNA-splicing endonuclease complex, a complex responsible for identification and cleavage of the splice sites in pre-tRNA. It cleaves pre-tRNA at the 5'- and 3'-splice sites to release the intron. The products are an intron and two tRNA half-molecules bearing 2',3'-cyclic phosphate and 5'-OH termini. There are no conserved sequences at the splice sites, but the intron is invariably located at the same site in the gene, placing the splice sites an invariant distance from the constant structural features of the tRNA body. Probably carries the active site for 5'-splice site cleavage. The sequence is that of Probable tRNA-splicing endonuclease subunit Sen2 from Oryza sativa subsp. japonica (Rice).